Here is a 122-residue protein sequence, read N- to C-terminus: Large ribosomal subunit protein uL14 (122 aa).

The protein belongs to the universal ribosomal protein uL14 family. As to quaternary structure, part of the 50S ribosomal subunit. Forms a cluster with proteins L3 and L19. In the 70S ribosome, L14 and L19 interact and together make contacts with the 16S rRNA in bridges B5 and B8.

Its function is as follows. Binds to 23S rRNA. Forms part of two intersubunit bridges in the 70S ribosome. This chain is Large ribosomal subunit protein uL14, found in Lacticaseibacillus casei (strain BL23) (Lactobacillus casei).